Reading from the N-terminus, the 248-residue chain is MSLFRDDGIVLRTQKLGEADRIITLLTRGHGRVRAVARGVRRTKSKFGARLEPFSHVDVQFFSRGSELIGRGLPLCTQSETIAPYGGAIVTDYARYTAGTAMLETAERFTDHEGEPAVQQYLLLVGGLRTLARGEHEPHLVLDAFLLRSLAVNGYAPSFSNCAKCGMPGPNRFFSVAAGGSVCVDCRVPGSVVPSAQALVLLGALLTGDWETADACEPRYVREGSGLVSAYLHWHLERGLRSLRYVEK.

It belongs to the RecO family.

In terms of biological role, involved in DNA repair and RecF pathway recombination. This chain is DNA repair protein RecO, found in Streptomyces avermitilis (strain ATCC 31267 / DSM 46492 / JCM 5070 / NBRC 14893 / NCIMB 12804 / NRRL 8165 / MA-4680).